The chain runs to 317 residues: CXXC-type zinc finger protein 5 (317 aa).

Low complexity predominate over residues 1 to 49 (MSSLSSGPQDTGGSSSSSSNGSSGSGPKAGVADKSAAVAAAAPASVADD). The disordered stretch occupies residues 1–96 (MSSLSSGPQD…GSGGGSMMGG (96 aa)). Positions 83–94 (GGSGGSGGGSMM) are enriched in gly residues. The CXXC-type zinc-finger motif lies at 251–292 (GKKKRKRCGMCAPCRRRINCEQCSSCRNRKTGHQICKFRKCE). A Nuclear localization signal motif is present at residues 252–257 (KKKRKR). Residues C258, C261, C264, C270, C273, C276, C286, and C291 each contribute to the Zn(2+) site.

Interacts with DVL1. Interacts with RBPJ.

The protein resides in the nucleus. The protein localises to the cytoplasm. Its function is as follows. May indirectly participate in activation of the NF-kappa-B and MAPK pathways. Acts as a mediator of BMP4-mediated modulation of canonical Wnt signaling activity in neural stem cells. Required for DNA damage-induced ATM phosphorylation, p53 activation and cell cycle arrest. Involved in myelopoiesis. Binds to the oxygen responsive element of COX4I2 and represses its transcription under hypoxia conditions (4% oxygen), as well as normoxia conditions (20% oxygen). May repress COX4I2 transactivation induced by CHCHD2 and RBPJ. Binds preferentially to DNA containing cytidine-phosphate-guanosine (CpG) dinucleotides over CpH (H=A, T, and C), hemimethylated-CpG and hemimethylated-hydroxymethyl-CpG. This Bos taurus (Bovine) protein is CXXC-type zinc finger protein 5 (CXXC5).